The chain runs to 757 residues: Protein lsd90 (757 aa).

Polar residues-rich tracts occupy residues 1-11 (MVGTINESMQN), 19-36 (TAQS…SSSK), 51-69 (TAGN…SKNL), and 94-118 (DTSN…STYE). Disordered regions lie at residues 1-131 (MVGT…SRSS), 224-244 (ERAR…EKQA), 589-633 (AQAE…KSKS), and 657-757 (AYVG…MSNK). Positions 166 to 604 (DEKTLQDLLE…KVESEYNSVK (439 aa)) form a coiled coil. Residues 589–598 (AQAEQSKVES) show a composition bias toward basic and acidic residues. Over residues 619–632 (VTTNEPTDVSTKSK) the composition is skewed to polar residues. Over residues 674 to 693 (STPSTLPTSASTNAAATTTT) the composition is skewed to low complexity. ATP is bound at residue 718-725 (GTTGLGKS).

May be involved in the metabolism of very long-chain fatty acid-containing phospholipids (VLCFA-PL). This Schizosaccharomyces pombe (strain 972 / ATCC 24843) (Fission yeast) protein is Protein lsd90 (lsd90).